The sequence spans 201 residues: Recombination protein RecR (201 aa).

The C4-type zinc-finger motif lies at 57 to 72 (CKYCSNFGNKDECDIC). One can recognise a Toprim domain in the interval 80–176 (TKLMIVTTNE…QIYRIGFGIP (97 aa)).

Belongs to the RecR family.

In terms of biological role, may play a role in DNA repair. It seems to be involved in an RecBC-independent recombinational process of DNA repair. It may act with RecF and RecO. In Ureaplasma urealyticum serovar 10 (strain ATCC 33699 / Western), this protein is Recombination protein RecR.